A 342-amino-acid polypeptide reads, in one-letter code: Glucokinase (342 aa).

15 to 20 (GDVGGT) serves as a coordination point for ATP.

This sequence belongs to the bacterial glucokinase family.

Its subcellular location is the cytoplasm. The enzyme catalyses D-glucose + ATP = D-glucose 6-phosphate + ADP + H(+). The sequence is that of Glucokinase from Ralstonia nicotianae (strain ATCC BAA-1114 / GMI1000) (Ralstonia solanacearum).